A 92-amino-acid polypeptide reads, in one-letter code: Small ribosomal subunit protein uS19 (92 aa).

It belongs to the universal ribosomal protein uS19 family.

Protein S19 forms a complex with S13 that binds strongly to the 16S ribosomal RNA. This Ruegeria pomeroyi (strain ATCC 700808 / DSM 15171 / DSS-3) (Silicibacter pomeroyi) protein is Small ribosomal subunit protein uS19.